The primary structure comprises 356 residues: Tyrosine recombinase XerS (356 aa).

A Core-binding (CB) domain is found at 16–121; it reads LMPWYVLEYY…ALSSLYKYLT (106 aa). A Tyr recombinase domain is found at 169–354; it reads GFLTYIDQEH…VNDEQKNALD (186 aa). Active-site residues include Arg210, Lys234, His306, Arg309, and His332. The active-site O-(3'-phospho-DNA)-tyrosine intermediate is the Tyr341.

The protein belongs to the 'phage' integrase family. XerS subfamily.

Its subcellular location is the cytoplasm. FtsK is required for recombination. In terms of biological role, site-specific tyrosine recombinase, which acts by catalyzing the cutting and rejoining of the recombining DNA molecules. Essential to convert dimers of the bacterial chromosome into monomers to permit their segregation at cell division. This Streptococcus pneumoniae serotype 2 (strain D39 / NCTC 7466) protein is Tyrosine recombinase XerS.